The chain runs to 229 residues: IVMLKNDNVEQKHINIKIADIDIDLFPKSGNIGVKVNGVEIPMENLPYYHPTVKIQIRQKGEGISVVAPSLGLSEVYMDSKSWKVEVVDWMKGQTCGLCGKADGEIKQEFRMPNGHLTKNAVTYAHSWILAAESCRDNSECRIKLDSVELEKRAVIYGQESRCFSVEPVLRCLPGCFPVKTTSVTVGFHCVAADSNVNKSEVLRGIQGKRVDLREKADAHLACSCTAQC.

The VWFD domain maps to Ile-1–Arg-136. Asn-198 carries an N-linked (GlcNAc...) asparagine glycan.

As to expression, expressed in liver, ovary and, to a lesser extent, in muscle, intestine, skin, kidney and heart.

In terms of biological role, precursor of the egg-yolk proteins that are sources of nutrients during early development of oviparous organisms. Probably binds tetrodotoxin in the ovary. This chain is Vitellogenin, found in Takifugu pardalis (Panther puffer).